Consider the following 216-residue polypeptide: Transmembrane emp24 domain-containing protein p24delta5 (216 aa).

The N-terminal stretch at 1–27 is a signal peptide; sequence MAINRIAHGSLFLTVVLFFLTVNYGEA. Topologically, residues 28-183 are lumenal; the sequence is IWLTIPTTGG…REVSETTNSR (156 aa). Residues 38 to 151 form the GOLD domain; the sequence is TKCVSEEIQS…IEGVELQLRR (114 aa). Asparagine 86 carries N-linked (GlcNAc...) asparagine glycosylation. The stretch at 137 to 159 forms a coiled coil; it reads AKKEKIEGVELQLRRLEGLVLSI. Residues arginine 169 and arginine 174 each carry the omega-N-methylated arginine modification. A helical membrane pass occupies residues 184–204; that stretch reads VAWFSIMSLGVCVVVVGSQIL. Over 205-216 the chain is Cytoplasmic; the sequence is YLKRYFHKKKLI. The COPII vesicle coat-binding motif lies at 209 to 210; sequence YF. The short motif at 209-216 is the COPI vesicle coat-binding element; it reads YFHKKKLI.

Belongs to the EMP24/GP25L family. As to quaternary structure, probably oligomerizes with other members of the EMP24/GP25L family. Associates with the COPI vesicle coat (coatomer). Associates with the COPII vesicle coat (coatomer). Interacts with p24beta2.

Its subcellular location is the endoplasmic reticulum membrane. Involved in vesicular protein trafficking. Mainly functions in the early secretory pathway. Thought to act as cargo receptor at the lumenal side for incorporation of secretory cargo molecules into transport vesicles and to be involved in vesicle coat formation at the cytoplasmic side. Interacts with p24beta2 at endoplasmic reticulum export sites for endoplasmic reticulum exit and coupled transport to the Golgi apparatus. Once in the Golgi, interacts very efficiently with the COPI machinery for retrograde transport back to the endoplasmic reticulum. This Arabidopsis thaliana (Mouse-ear cress) protein is Transmembrane emp24 domain-containing protein p24delta5.